Reading from the N-terminus, the 323-residue chain is Serine/threonine-protein phosphatase PP1 (323 aa).

4 residues coordinate Mn(2+): D63, H65, D91, and N123. The active-site Proton donor is H124. Mn(2+)-binding residues include H172 and H247.

The protein belongs to the PPP phosphatase family. PP-1 subfamily. Mn(2+) is required as a cofactor.

The catalysed reaction is O-phospho-L-seryl-[protein] + H2O = L-seryl-[protein] + phosphate. The enzyme catalyses O-phospho-L-threonyl-[protein] + H2O = L-threonyl-[protein] + phosphate. Functionally, plays an important role in the control of mitosis by reversing the action of the nimA kinase. This Emericella nidulans (strain FGSC A4 / ATCC 38163 / CBS 112.46 / NRRL 194 / M139) (Aspergillus nidulans) protein is Serine/threonine-protein phosphatase PP1 (bimG).